A 483-amino-acid chain; its full sequence is MASLLWGGDAGAAESERLNGHFSNLIHPQNHLLGIKSATIPNIDGSVNRIEEDDEDDVVDLAANSLLNKLIRQSLVESSHRVEVLQKDPSSPLYSVKTFEELRLKEELLKGIYAMGFNRPSKIQEMALPMMLAHPPQNLIAQSQSGTGKTAAFVLAMLSRVNALKLFPQCLCLAPTYELALQTGRVVERMGKFCVDVQVMYAIRGNRIPRGTDVTKQIVIGTPGTVLDWCFKRKLIDLTKIRVFVLDEADVMIDTQGFEDQSIRIQRALPSECQMLLFSATFEDSVWQFAERIIPDPNVIKLRKEELTLNNIRQYYVLCGNRKDKYQALCNIYGGITIGQAIIFCQTRRNAKWLTVEMMQDGHQVSLLSGELTVDQRASIIQRFRDGKEKVLITTNVCARGIDVKQVTIVVNFDLPVNQAEEPDYETYLHRIGRTGRFGKKGLAFNMIEVDKLPLLMKIQDHFNSSIKQLDPEDMDEIEKIEY.

A Nuclear export signal motif is present at residues 61 to 74 (LAANSLLNKLIRQS). Positions 97 to 125 (KTFEELRLKEELLKGIYAMGFNRPSKIQE) match the Q motif motif. Residues 100 to 114 (EELRLKEELLKGIYA) carry the Nuclear localization signal motif. In terms of domain architecture, Helicase ATP-binding spans 130–300 (MMLAHPPQNL…ERIIPDPNVI (171 aa)). 143–150 (SQSGTGKT) is an ATP binding site. A DEAD box motif is present at residues 247–250 (DEAD). Residues 311-478 (NIRQYYVLCG…QLDPEDMDEI (168 aa)) enclose the Helicase C-terminal domain.

The protein belongs to the DEAD box helicase family. Phosphorylated on threonine residues. The phosphorylated form is found in the cytoplasm but not in the nucleus.

The protein localises to the cytoplasm. It is found in the nucleus. It carries out the reaction ATP + H2O = ADP + phosphate + H(+). Functionally, ATP-dependent RNA helicase. Required for mRNA export and translation regulation during spermatid development. This chain is ATP-dependent RNA helicase DDX25 (DDX25), found in Bos taurus (Bovine).